The sequence spans 432 residues: MPEYVNWLRHASPYINAHRDCTFVVMLPGDGVEHPNFGNIVHDIVLLHSLGVRLVLVHGSRPQIETRLAARGLTPHYHHGMRITDAATLECVIDAVGQLRIAIEARLSMDMASSPMQGSRLRVASGNLVTARPIGVLEGVDYHHTGEVRRVDRKGINRLLDERSIVLLSPLGYSPTGEIFNLACEDVATRAAIDLGADKLLLFGADLGLIDENGKLVRELRPQQVPAHLQRLGSNYQAELLDAAAEACRGGVARSHIVSYAEDGALLTELFTRDGGGTLVAQEQFELVREAAIEDVGGLLDLISPLEEQGILVRRSREVLEREIEQFSVVEREGMIIACAALYQIADSDAGELACLAVNPEYRHGGRGDELLERIETRARAQGLKTLFVLTTRTAHWFRERGFEPSSVERLPAARASLYNYQRNSKIFEKSL.

Residues 286–425 enclose the N-acetyltransferase domain; it reads ELVREAAIED…ASLYNYQRNS (140 aa).

This sequence belongs to the acetyltransferase family. ArgA subfamily.

Its subcellular location is the cytoplasm. It carries out the reaction L-glutamate + acetyl-CoA = N-acetyl-L-glutamate + CoA + H(+). It participates in amino-acid biosynthesis; L-arginine biosynthesis; N(2)-acetyl-L-ornithine from L-glutamate: step 1/4. The sequence is that of Amino-acid acetyltransferase from Pseudomonas fluorescens (strain Pf0-1).